We begin with the raw amino-acid sequence, 346 residues long: tRNA (guanine-N(7)-)-methyltransferase (346 aa).

Residues Gly-101 and 124–125 (EI) contribute to the S-adenosyl-L-methionine site. The disordered stretch occupies residues 149-191 (LKSAGGGGSDAAPESPAAPPTPSEAASPDSTTPSEQQAPTTLV). Residues 171 to 182 (SEAASPDSTTPS) show a composition bias toward low complexity. Residues 204–205 (NT) and Cys-224 contribute to the S-adenosyl-L-methionine site. Asp-227 is a catalytic residue. 318–320 (TEE) provides a ligand contact to S-adenosyl-L-methionine.

The protein belongs to the class I-like SAM-binding methyltransferase superfamily. TrmB family. In terms of assembly, forms a complex with trm82.

Its subcellular location is the nucleus. It carries out the reaction guanosine(46) in tRNA + S-adenosyl-L-methionine = N(7)-methylguanosine(46) in tRNA + S-adenosyl-L-homocysteine. It participates in tRNA modification; N(7)-methylguanine-tRNA biosynthesis. Functionally, catalyzes the formation of N(7)-methylguanine at position 46 (m7G46) in tRNA. The protein is tRNA (guanine-N(7)-)-methyltransferase (trm8) of Aspergillus terreus (strain NIH 2624 / FGSC A1156).